Reading from the N-terminus, the 185-residue chain is Ubiquitin-conjugating enzyme E2 2 (185 aa).

Residues 4–150 (PSKKRLIRDF…VKATVEASWL (147 aa)) enclose the UBC core domain. Cysteine 88 acts as the Glycyl thioester intermediate in catalysis. The segment covering 149-173 (WLDDGEMPESIEEDDEAEAEAEAEA) has biased composition (acidic residues). Residues 149–185 (WLDDGEMPESIEEDDEAEAEAEAEATVDRSAPQTASA) form a disordered region.

The protein belongs to the ubiquitin-conjugating enzyme family.

It localises to the cytoplasm. Its subcellular location is the nucleus. It catalyses the reaction S-ubiquitinyl-[E1 ubiquitin-activating enzyme]-L-cysteine + [E2 ubiquitin-conjugating enzyme]-L-cysteine = [E1 ubiquitin-activating enzyme]-L-cysteine + S-ubiquitinyl-[E2 ubiquitin-conjugating enzyme]-L-cysteine.. It participates in protein modification; protein ubiquitination. Its function is as follows. Catalyzes the covalent attachment of ubiquitin to other proteins. Plays a role in transcription regulation by catalyzing the monoubiquitination of histone H2B to form H2BK123ub1. H2BK123ub1 gives a specific tag for epigenetic transcriptional activation and is also a prerequisite for H3K4me and H3K79me formation. Also involved in postreplication repair of UV-damaged DNA, in N-end rule-dependent protein degradation and in sporulation. The sequence is that of Ubiquitin-conjugating enzyme E2 2 (UBC2) from Mycosarcoma maydis (Corn smut fungus).